A 67-amino-acid chain; its full sequence is Medusin-PT (67 aa).

A signal peptide spans 1-22; that stretch reads MAFLKKSLFLVFFLGFVSLSIC. A propeptide spanning residues 23 to 48 is cleaved from the precursor; it reads EEEKRETDEKENEQEDDREERSEEKR. The disordered stretch occupies residues 25–46; it reads EKRETDEKENEQEDDREERSEE. Acidic residues predominate over residues 31-40; that stretch reads EKENEQEDDR. Position 66 is a leucine amide (Leu-66).

Belongs to the frog skin active peptide (FSAP) family. Medusin subfamily. In terms of processing, in the synthetic mutant medusin-PT1a [T58K], the Leu-50 has been modified in a D-amino acid. In medusin-PT1a, there is an increase in antimicrobial activity, and an increase in hemolytic activity. It is more potent against S.aureus and gains activity against MRSA, E.faecalis, E.coli, P.aeruginosa and C.albicans. There is an important increase in both biofilm inhibition and biofilm eradication. In terms of tissue distribution, expressed by the skin glands.

Its subcellular location is the secreted. The protein resides in the target cell membrane. Functionally, antimicrobial peptide with activity against Gram-positive bacteria S.epidermidis ATCC 12228 (MIC=50 uM) and S.aureus (MIC=64 ug/ml and MBC=128 ug/ml). Not active against some Gram-positive bacteria (methicillin-resistant S.aureus (MRSA), E.faecalis), Gram-negative bacterium E.coli ATCC 25922 and fungus C.albicans at concentrations up to 100 uM. Can only slightly inhibit the formation of biofilm by S.aureus (minimal biofilm inhibitionconcentration MBIC=512 ug/ml, minimal biofilm eradication concentration MBEC&gt;512 ug/ml). Has an anti-inflammatory effect, since it inhibits the production of the pro-inflammatory cytokines TNF-alpha and IL-1beta. Has high activity of stimulation of insulin release, which may protect the species from being eaten by predators by causing fatal hypoglycemia. Is not cytotoxic to cancer line cells. Shows very low hemolysis on horse erythrocytes and moderate hemolysis on mouse erythrocytes. This chain is Medusin-PT, found in Phyllomedusa tarsius (Brownbelly leaf frog).